The sequence spans 296 residues: Urease operon transcriptional activator (296 aa).

The region spanning 171–268 (QAITHLITQE…NMTPSQFRLQ (98 aa)) is the HTH araC/xylS-type domain. 2 consecutive DNA-binding regions (H-T-H motif) follow at residues 188–209 (DDVA…NREG) and 235–258 (VFQI…KRKY).

Functionally, positive regulator of the expression of the urease operon. The polypeptide is Urease operon transcriptional activator (ureR) (Escherichia coli).